The chain runs to 229 residues: Germin-like protein 2-4 (229 aa).

The first 23 residues, 1–23, serve as a signal peptide directing secretion; the sequence is MAHRRRCLLLLLAVLLPAMAARG. Cysteines 32 and 52 form a disulfide. Asn57 carries N-linked (GlcNAc...) asparagine glycosylation. In terms of domain architecture, Cupin type-1 spans 66–213; the sequence is SGVRAAGNFS…AFGLTPAELR (148 aa). Mn(2+) contacts are provided by His115, His117, Glu122, and His161.

This sequence belongs to the germin family. As to quaternary structure, oligomer (believed to be a pentamer but probably hexamer).

Its subcellular location is the secreted. The protein resides in the extracellular space. It localises to the apoplast. Its function is as follows. May play a role in plant defense. Probably has no oxalate oxidase activity even if the active site is conserved. This chain is Germin-like protein 2-4, found in Oryza sativa subsp. japonica (Rice).